The sequence spans 634 residues: Probable potassium transport system protein Kup (634 aa).

A run of 12 helical transmembrane segments spans residues 21–41 (LVIGAIGVVFGDIGTSPLYTL), 58–78 (VLGILSLVFWALMLVVTLKYV), 110–130 (MYVVGILGIFGASLFFGDGVI), 147–167 (APKLEPFVVPITLVVLSMLFL), 179–199 (AFGPITLLWFFALGAIGVYNM), 223–243 (WHAVFVLGAVVLAVTGGEALY), 258–278 (WQFVVLPMLTLTYLGQGALVL), 296–316 (ALYPMIVLATAATVIASQALI), 348–368 (IYVPAVNWCLLALVAVAVIGF), 377–397 (AYGVSVTGTMLITTVLMIIYA), 403–423 (VPAPLLWLFALVFLAVDCAFF), and 427–447 (IIKFLDGAWFPLLLGLILFTL).

This sequence belongs to the HAK/KUP transporter (TC 2.A.72) family.

The protein resides in the cell inner membrane. It catalyses the reaction K(+)(in) + H(+)(in) = K(+)(out) + H(+)(out). Functionally, transport of potassium into the cell. Likely operates as a K(+):H(+) symporter. The protein is Probable potassium transport system protein Kup of Xanthomonas axonopodis pv. citri (strain 306).